The chain runs to 333 residues: tRNA-modifying protein YgfZ (333 aa).

Folate is bound by residues tryptophan 33 and tryptophan 195.

It belongs to the tRNA-modifying YgfZ family.

It localises to the cytoplasm. Folate-binding protein involved in regulating the level of ATP-DnaA and in the modification of some tRNAs. It is probably a key factor in regulatory networks that act via tRNA modification, such as initiation of chromosomal replication. The protein is tRNA-modifying protein YgfZ of Pectobacterium carotovorum subsp. carotovorum (strain PC1).